The sequence spans 481 residues: Matrilin-3 (481 aa).

Positions 1-27 (MLLSAPLRHLPGLLLLLWPLLLLPSLA) are cleaved as a signal peptide. A VWFA domain is found at 78–253 (DLVFIIDSSR…GVIEKLSARF (176 aa)). Arg-193 bears the Omega-N-methylarginine mark. EGF-like domains follow at residues 259–300 (ALDQ…KTCS), 301–342 (AIDK…RTCA), 343–384 (ALDK…KTCS), and 385–426 (VRNK…KTCS). 12 disulfide bridges follow: Cys-263/Cys-274, Cys-270/Cys-284, Cys-286/Cys-299, Cys-305/Cys-316, Cys-312/Cys-326, Cys-328/Cys-341, Cys-347/Cys-358, Cys-354/Cys-368, Cys-370/Cys-383, Cys-389/Cys-400, Cys-396/Cys-410, and Cys-412/Cys-425. N-linked (GlcNAc...) asparagine glycosylation occurs at Asn-321. Phosphoserine; by FAM20C is present on Ser-436. Positions 451–475 (EKVSSHLQKLNTKLDNILKKLKVTE) form a coiled coil.

Can form homooligomers (monomers, dimers, trimers and tetramers) and heterooligomers with matrilin-1. Interacts with COMP. Component of a complex containing at least CRELD2, MANF, MATN3 and PDIA4. Strongly expressed in growing skeletal tissue such as epiphyseal growth plate or in bone undergoing growth and remodeling. In the bone, actively synthesized in osteoblasts and osteocytes. Expressed in cartilage of sternum, femur, vertebrae, trachea, articular and epiphyseal cartilage, cartilage of developing bones and bones.

The protein resides in the secreted. Its function is as follows. Major component of the extracellular matrix of cartilage and may play a role in the formation of extracellular filamentous networks. The chain is Matrilin-3 (Matn3) from Mus musculus (Mouse).